The following is a 1381-amino-acid chain: Hepatocyte growth factor receptor (1381 aa).

An N-terminal signal peptide occupies residues Met-1 to Gly-24. Over Glu-25–Thr-932 the chain is Extracellular. One can recognise a Sema domain in the interval Lys-27 to Leu-515. A glycan (N-linked (GlcNAc...) asparagine) is linked at Asn-45. 4 disulfide bridges follow: Cys-95/Cys-101, Cys-98/Cys-160, Cys-133/Cys-141, and Cys-172/Cys-175. Asn-106 carries N-linked (GlcNAc...) asparagine glycosylation. Residue Asn-149 is glycosylated (N-linked (GlcNAc...) asparagine). N-linked (GlcNAc...) asparagine glycosylation is present at Asn-202. 2 disulfide bridges follow: Cys-298–Cys-363 and Cys-385–Cys-397. Asn-399 and Asn-405 each carry an N-linked (GlcNAc...) asparagine glycan. 4 disulfide bridges follow: Cys-520–Cys-538, Cys-526–Cys-561, Cys-529–Cys-545, and Cys-541–Cys-551. 3 consecutive IPT/TIG domains span residues Pro-563–Val-655, Pro-657–Arg-739, and Pro-742–Val-836. Residue Thr-582 is glycosylated (O-linked (Man) threonine). Residues Asn-607 and Asn-635 are each glycosylated (N-linked (GlcNAc...) asparagine). O-linked (Man) threonine glycosylation is found at Thr-676 and Thr-761. Residues Asn-785, Asn-879, and Asn-930 are each glycosylated (N-linked (GlcNAc...) asparagine). Residues Gly-933–Leu-955 traverse the membrane as a helical segment. Topologically, residues Lys-956–Thr-1381 are cytoplasmic. Ser-966 carries the post-translational modification Phosphoserine. Position 977 is a phosphothreonine (Thr-977). Residues Ser-990, Ser-997, and Ser-1000 each carry the phosphoserine modification. Tyr-1003 is subject to Phosphotyrosine. In terms of domain architecture, Protein kinase spans Val-1078–Ile-1345. ATP contacts are provided by residues Ile-1084–Val-1092 and Lys-1110. The active-site Proton acceptor is the Asp-1204. The interval Leu-1212–Thr-1381 is interaction with RANBP9. Tyr-1230 carries the phosphotyrosine modification. Tyr-1234 and Tyr-1235 each carry phosphotyrosine; by autocatalysis. Thr-1289 carries the post-translational modification Phosphothreonine. The interaction with MUC20 stretch occupies residues Trp-1320–Val-1359. Residues Tyr-1349 and Tyr-1356 each carry the phosphotyrosine; by autocatalysis modification. Residue Tyr-1365 is modified to Phosphotyrosine.

The protein belongs to the protein kinase superfamily. Tyr protein kinase family. In terms of assembly, heterodimer made of an alpha chain (50 kDa) and a beta chain (145 kDa) which are disulfide linked. Binds PLXNB1. Interacts when phosphorylated with downstream effectors including STAT3, PIK3R1, SRC, PCLG1, GRB2 and GAB1. Interacts with SPSB1, SPSB2 and SPSB4. Interacts with INPP5D/SHIP1. When phosphorylated at Tyr-1356, interacts with INPPL1/SHIP2. Interacts with RANBP9 and RANBP10, as well as SPSB1, SPSB2, SPSB3 and SPSB4. SPSB1 binding occurs in the presence and in the absence of HGF, however HGF treatment has a positive effect on this interaction. Interacts with MUC20; prevents interaction with GRB2 and suppresses hepatocyte growth factor-induced cell proliferation. Interacts with GRB10. Interacts with PTPN1 and PTPN2. Interacts with HSP90AA1 and HSP90AB1; the interaction suppresses MET kinase activity. Interacts with tensin TNS3. Interacts (when phosphorylated) with tensin TNS4 (via SH2 domain); the interaction increases MET protein stability by inhibiting MET endocytosis and subsequent lysosomal degradation. Post-translationally, autophosphorylated in response to ligand binding on Tyr-1234 and Tyr-1235 in the kinase domain leading to further phosphorylation of Tyr-1349 and Tyr-1356 in the C-terminal multifunctional docking site. Dephosphorylated by PTPRJ at Tyr-1349 and Tyr-1365. Dephosphorylated by PTPN1 and PTPN2. In terms of processing, ubiquitinated. Ubiquitination by CBL regulates the receptor stability and activity through proteasomal degradation. O-mannosylation of IPT/TIG domains by TMEM260 is required for protein maturation. O-mannosylated residues are composed of single mannose glycans that are not elongated or modified.

The protein resides in the membrane. It catalyses the reaction L-tyrosyl-[protein] + ATP = O-phospho-L-tyrosyl-[protein] + ADP + H(+). In its inactive state, the C-terminal tail interacts with the catalytic domain and inhibits the kinase activity. Upon ligand binding, the C-terminal tail is displaced and becomes phosphorylated, thus increasing the kinase activity. Its function is as follows. Receptor tyrosine kinase that transduces signals from the extracellular matrix into the cytoplasm by binding to hepatocyte growth factor/HGF ligand. Regulates many physiological processes including proliferation, scattering, morphogenesis and survival. Ligand binding at the cell surface induces autophosphorylation of MET on its intracellular domain that provides docking sites for downstream signaling molecules. Following activation by ligand, interacts with the PI3-kinase subunit PIK3R1, PLCG1, SRC, GRB2, STAT3 or the adapter GAB1. Recruitment of these downstream effectors by MET leads to the activation of several signaling cascades including the RAS-ERK, PI3 kinase-AKT, or PLCgamma-PKC. The RAS-ERK activation is associated with the morphogenetic effects while PI3K/AKT coordinates prosurvival effects. During embryonic development, MET signaling plays a role in gastrulation, development and migration of muscles and neuronal precursors, angiogenesis and kidney formation. In adults, participates in wound healing as well as organ regeneration and tissue remodeling. Also promotes differentiation and proliferation of hematopoietic cells. The chain is Hepatocyte growth factor receptor (MET) from Papio anubis (Olive baboon).